Reading from the N-terminus, the 194-residue chain is RNA polymerase II subunit A C-terminal domain phosphatase SSU72 like protein 2 (194 aa).

It belongs to the SSU72 phosphatase family.

The protein resides in the nucleus. The catalysed reaction is O-phospho-L-seryl-[protein] + H2O = L-seryl-[protein] + phosphate. It catalyses the reaction O-phospho-L-threonyl-[protein] + H2O = L-threonyl-[protein] + phosphate. Protein phosphatase that catalyzes the dephosphorylation of the C-terminal domain of RNA polymerase II. Plays a role in RNA processing and termination. The sequence is that of RNA polymerase II subunit A C-terminal domain phosphatase SSU72 like protein 2 from Homo sapiens (Human).